The chain runs to 315 residues: Tetraacyldisaccharide 4'-kinase (315 aa).

45–52 provides a ligand contact to ATP; the sequence is SVGGSGKT.

This sequence belongs to the LpxK family.

The enzyme catalyses a lipid A disaccharide + ATP = a lipid IVA + ADP + H(+). It participates in glycolipid biosynthesis; lipid IV(A) biosynthesis; lipid IV(A) from (3R)-3-hydroxytetradecanoyl-[acyl-carrier-protein] and UDP-N-acetyl-alpha-D-glucosamine: step 6/6. Its function is as follows. Transfers the gamma-phosphate of ATP to the 4'-position of a tetraacyldisaccharide 1-phosphate intermediate (termed DS-1-P) to form tetraacyldisaccharide 1,4'-bis-phosphate (lipid IVA). This is Tetraacyldisaccharide 4'-kinase from Aquifex aeolicus (strain VF5).